We begin with the raw amino-acid sequence, 361 residues long: Phospho-N-acetylmuramoyl-pentapeptide-transferase (361 aa).

The next 10 membrane-spanning stretches (helical) occupy residues 28-48 (LAII…IKFL), 74-94 (TMGG…LADL), 99-119 (IWIT…DDYA), 133-153 (SKFL…EYLD), 168-188 (LSLD…VGSS), 203-223 (VPIA…GNLI), 236-256 (TGEL…FLWF), 263-283 (VFMG…ISVI), 288-308 (IVLA…ILQV), and 338-358 (KVVI…LSSL).

It belongs to the glycosyltransferase 4 family. MraY subfamily. Mg(2+) is required as a cofactor.

The protein resides in the cell inner membrane. The catalysed reaction is UDP-N-acetyl-alpha-D-muramoyl-L-alanyl-gamma-D-glutamyl-meso-2,6-diaminopimeloyl-D-alanyl-D-alanine + di-trans,octa-cis-undecaprenyl phosphate = di-trans,octa-cis-undecaprenyl diphospho-N-acetyl-alpha-D-muramoyl-L-alanyl-D-glutamyl-meso-2,6-diaminopimeloyl-D-alanyl-D-alanine + UMP. It functions in the pathway cell wall biogenesis; peptidoglycan biosynthesis. Its function is as follows. Catalyzes the initial step of the lipid cycle reactions in the biosynthesis of the cell wall peptidoglycan: transfers peptidoglycan precursor phospho-MurNAc-pentapeptide from UDP-MurNAc-pentapeptide onto the lipid carrier undecaprenyl phosphate, yielding undecaprenyl-pyrophosphoryl-MurNAc-pentapeptide, known as lipid I. This Rickettsia prowazekii (strain Madrid E) protein is Phospho-N-acetylmuramoyl-pentapeptide-transferase.